The primary structure comprises 398 residues: Phosphoglycerate kinase (398 aa).

Substrate contacts are provided by residues 21-23, Arg-36, 59-62, Arg-119, and Arg-157; these read DFN and HLGR. ATP-binding positions include Lys-208, Gly-296, Glu-327, and 354-357; that span reads GGDS.

It belongs to the phosphoglycerate kinase family. As to quaternary structure, monomer.

It localises to the cytoplasm. It carries out the reaction (2R)-3-phosphoglycerate + ATP = (2R)-3-phospho-glyceroyl phosphate + ADP. It participates in carbohydrate degradation; glycolysis; pyruvate from D-glyceraldehyde 3-phosphate: step 2/5. The chain is Phosphoglycerate kinase from Streptococcus mutans serotype c (strain ATCC 700610 / UA159).